The chain runs to 286 residues: Leukocyte cell-derived chemotaxin 1 (286 aa).

A helical transmembrane segment spans residues 29–49; that stretch reads LVAFIAGAALLLFGGVGAFYL. The region spanning 75–157 is the BRICHOS domain; sequence DSAEGTIVEV…FCADLPIYWH (83 aa). Cys102 and Cys149 are oxidised to a cystine. The propeptide occupies 166–169; sequence RKRR. Residues 166-176 are compositionally biased toward basic residues; sequence RKRRSATRMRR. The disordered stretch occupies residues 166–220; it reads RKRRSATRMRRQTSAGVNRQPARRRNSTASARDERPTGPEYNPENPYHQNQGSEG. N-linked (GlcNAc...) asparagine glycosylation is present at Asn191. 4 disulfide bridges follow: Cys234–Cys238, Cys235–Cys275, Cys245–Cys269, and Cys249–Cys265.

Belongs to the chondromodulin-1 family. After cleavage, the post-translationally modified ChM-I is secreted as a glycoprotein.

It localises to the secreted. The protein localises to the extracellular space. Its subcellular location is the extracellular matrix. It is found in the endomembrane system. Bifunctional growth regulator. May contribute to the rapid growth of cartilage and vascular invasion prior to the replacement of cartilage by bone during endochondral bone development. Plays a role as antiangiogenic factor in cardiac valves to suppress neovascularization. This Danio rerio (Zebrafish) protein is Leukocyte cell-derived chemotaxin 1.